A 32-amino-acid chain; its full sequence is Photosystem II reaction center protein Z (32 aa).

Residues 9 to 29 (IIFSGSLIWVFLLIIVGFLNY) traverse the membrane as a helical segment.

This sequence belongs to the PsbZ family. In terms of assembly, PSII is composed of 1 copy each of membrane proteins PsbA, PsbB, PsbC, PsbD, PsbE, PsbF, PsbH, PsbI, PsbJ, PsbK, PsbL, PsbM, PsbT, PsbY, PsbZ, Psb30/Ycf12, at least 3 peripheral proteins of the oxygen-evolving complex and a large number of cofactors. It forms dimeric complexes.

The protein localises to the plastid. Its subcellular location is the chloroplast thylakoid membrane. Its function is as follows. May control the interaction of photosystem II (PSII) cores with the light-harvesting antenna, regulates electron flow through the 2 photosystem reaction centers. PSII is a light-driven water plastoquinone oxidoreductase, using light energy to abstract electrons from H(2)O, generating a proton gradient subsequently used for ATP formation. The protein is Photosystem II reaction center protein Z of Euglena myxocylindracea.